The sequence spans 262 residues: Large ribosomal subunit protein bL9m (262 aa).

Residues 1–49 constitute a mitochondrion transit peptide; sequence MAASMAPRCSSLLWAGAAWLRQRGIGELLQPRIERSTPGRDFSLSHYQS.

The protein belongs to the bacterial ribosomal protein bL9 family. As to quaternary structure, component of the mitochondrial ribosome large subunit (39S) which comprises a 16S rRNA and about 50 distinct proteins.

Its subcellular location is the mitochondrion. The sequence is that of Large ribosomal subunit protein bL9m (Mrpl9) from Rattus norvegicus (Rat).